Reading from the N-terminus, the 201-residue chain is Holliday junction branch migration complex subunit RuvA (201 aa).

A domain I region spans residues 1–63 (MIAFVSGTVA…EDSLTLYGFA (63 aa)). Residues 64-139 (DDDERQVFEL…RLGEPIGAPA (76 aa)) are domain II. A flexible linker region spans residues 139 to 143 (AVGAP). Residues 144–201 (VSTGWRDQLHAALIGLGYATREADEAVSAVAPQAEAAGGTPQVGALLKAALQTLNRAR) are domain III.

This sequence belongs to the RuvA family. In terms of assembly, homotetramer. Forms an RuvA(8)-RuvB(12)-Holliday junction (HJ) complex. HJ DNA is sandwiched between 2 RuvA tetramers; dsDNA enters through RuvA and exits via RuvB. An RuvB hexamer assembles on each DNA strand where it exits the tetramer. Each RuvB hexamer is contacted by two RuvA subunits (via domain III) on 2 adjacent RuvB subunits; this complex drives branch migration. In the full resolvosome a probable DNA-RuvA(4)-RuvB(12)-RuvC(2) complex forms which resolves the HJ.

Its subcellular location is the cytoplasm. Its function is as follows. The RuvA-RuvB-RuvC complex processes Holliday junction (HJ) DNA during genetic recombination and DNA repair, while the RuvA-RuvB complex plays an important role in the rescue of blocked DNA replication forks via replication fork reversal (RFR). RuvA specifically binds to HJ cruciform DNA, conferring on it an open structure. The RuvB hexamer acts as an ATP-dependent pump, pulling dsDNA into and through the RuvAB complex. HJ branch migration allows RuvC to scan DNA until it finds its consensus sequence, where it cleaves and resolves the cruciform DNA. The protein is Holliday junction branch migration complex subunit RuvA of Streptomyces coelicolor (strain ATCC BAA-471 / A3(2) / M145).